The sequence spans 195 residues: PRELI domain containing protein 3B (195 aa).

The region spanning 1 to 172 (MKIWTSEHVF…VIHKLNAEIE (172 aa)) is the PRELI/MSF1 domain. Ser-46 and Ser-51 each carry phosphoserine.

It belongs to the slowmo family.

The chain is PRELI domain containing protein 3B (Prelid3b) from Rattus norvegicus (Rat).